Reading from the N-terminus, the 256-residue chain is Zinc import ATP-binding protein ZnuC 1 (256 aa).

Positions 5 to 220 constitute an ABC transporter domain; it reads LTLQDVCVVF…PKYIALFGQQ (216 aa). 37-44 lines the ATP pocket; it reads GPNGAGKS. The tract at residues 232–256 is disordered; sequence HHHNHDLSGEPSDGSCCSKNKKAHQ.

Belongs to the ABC transporter superfamily. Zinc importer (TC 3.A.1.15.5) family. In terms of assembly, the complex is composed of two ATP-binding proteins (ZnuC), two transmembrane proteins (ZnuB) and a solute-binding protein (ZnuA).

It localises to the cell inner membrane. It catalyses the reaction Zn(2+)(out) + ATP(in) + H2O(in) = Zn(2+)(in) + ADP(in) + phosphate(in) + H(+)(in). Its function is as follows. Part of the ABC transporter complex ZnuABC involved in zinc import. Responsible for energy coupling to the transport system. This chain is Zinc import ATP-binding protein ZnuC 1, found in Aliivibrio fischeri (strain ATCC 700601 / ES114) (Vibrio fischeri).